The chain runs to 305 residues: Mitochondrial thiamine pyrophosphate carrier 1 (305 aa).

Transmembrane regions (helical) follow at residues 16–32 (VSPY…GAVA), 84–100 (ILYV…YSSI), 122–142 (LVSG…FDLL), 169–193 (GFTG…LMFW), 213–229 (ICGF…TFPL), and 270–287 (GFGI…VSLF). Solcar repeat units lie at residues 16-103 (VSPY…ISRW), 116-201 (PSSA…VRET), and 206-295 (DIPF…SLAA).

It belongs to the mitochondrial carrier (TC 2.A.29) family.

The protein localises to the mitochondrion inner membrane. Its function is as follows. Mitochondrial transporter that mediates uptake of thiamine pyrophosphate (ThPP) into mitochondria. This chain is Mitochondrial thiamine pyrophosphate carrier 1 (TPC1), found in Scheffersomyces stipitis (strain ATCC 58785 / CBS 6054 / NBRC 10063 / NRRL Y-11545) (Yeast).